The sequence spans 927 residues: Isoleucine--tRNA ligase (927 aa).

Residues 57 to 67 carry the 'HIGH' region motif; the sequence is PYANGHIHIGH. Glu561 is a binding site for L-isoleucyl-5'-AMP. A 'KMSKS' region motif is present at residues 602 to 606; that stretch reads KMSKS. Lys605 lines the ATP pocket. Residues Cys897, Cys900, Cys917, and Cys920 each coordinate Zn(2+).

This sequence belongs to the class-I aminoacyl-tRNA synthetase family. IleS type 1 subfamily. As to quaternary structure, monomer. Requires Zn(2+) as cofactor.

Its subcellular location is the cytoplasm. It carries out the reaction tRNA(Ile) + L-isoleucine + ATP = L-isoleucyl-tRNA(Ile) + AMP + diphosphate. In terms of biological role, catalyzes the attachment of isoleucine to tRNA(Ile). As IleRS can inadvertently accommodate and process structurally similar amino acids such as valine, to avoid such errors it has two additional distinct tRNA(Ile)-dependent editing activities. One activity is designated as 'pretransfer' editing and involves the hydrolysis of activated Val-AMP. The other activity is designated 'posttransfer' editing and involves deacylation of mischarged Val-tRNA(Ile). This Syntrophotalea carbinolica (strain DSM 2380 / NBRC 103641 / GraBd1) (Pelobacter carbinolicus) protein is Isoleucine--tRNA ligase.